Reading from the N-terminus, the 551-residue chain is Membrane protein insertase YidC (551 aa).

A helical transmembrane segment spans residues 3–23 (ANHIRILLLVTIAIMFISLMG). A compositionally biased stretch (polar residues) spans 33 to 47 (NTKQQTSATQNNSHY). The tract at residues 33–59 (NTKQQTSATQNNSHYDNADSSTNTDVT) is disordered. A compositionally biased stretch (low complexity) spans 50–59 (ADSSTNTDVT). Transmembrane regions (helical) follow at residues 361–381 (LVGN…LIFY), 431–451 (LSGC…YWVL), and 504–524 (VMMF…SGLV).

This sequence belongs to the OXA1/ALB3/YidC family. Type 1 subfamily. In terms of assembly, interacts with the Sec translocase complex via SecD. Specifically interacts with transmembrane segments of nascent integral membrane proteins during membrane integration.

It localises to the cell inner membrane. Functionally, required for the insertion and/or proper folding and/or complex formation of integral membrane proteins into the membrane. Involved in integration of membrane proteins that insert both dependently and independently of the Sec translocase complex, as well as at least some lipoproteins. Aids folding of multispanning membrane proteins. In Francisella tularensis subsp. tularensis (strain SCHU S4 / Schu 4), this protein is Membrane protein insertase YidC.